Consider the following 122-residue polypeptide: Antitoxin protein TsiV3 (122 aa).

The N-terminal stretch at 1 to 24 is a signal peptide; the sequence is MNNLLSAYVTMLLILLSISGGAIA. Intrachain disulfides connect C28–C41 and C82–C100.

As to quaternary structure, homodimer; dimerization is critical for inhibitory activity. Forms a heterotetramer with VgrG3 composed of one TsiV3 homodimer and two VgrG3 molecules.

Immunity protein that plays a role in preventing early activation of toxin VgrG3. This Vibrio cholerae serotype O1 (strain ATCC 39315 / El Tor Inaba N16961) protein is Antitoxin protein TsiV3.